The primary structure comprises 520 residues: Mu-like prophage FluMu protein gp29 (520 aa).

It to phage Mu protein gp29.

In Haemophilus influenzae (strain ATCC 51907 / DSM 11121 / KW20 / Rd), this protein is Mu-like prophage FluMu protein gp29.